We begin with the raw amino-acid sequence, 294 residues long: Glycine N-acyltransferase-like protein 2 (294 aa).

N6-acetyllysine is present on lysine 19.

This sequence belongs to the glycine N-acyltransferase family. Post-translationally, acetylation at Lys-19 drastically decreases the production of N-oleoyl and N-arachidonoyl glycines. Expressed at highest levels in salivary gland and trachea. Also detected in thyroid gland, spinal cord, prostate, lung and fetal brain.

It is found in the endoplasmic reticulum. The catalysed reaction is an acyl-CoA + glycine = an N-acylglycine + CoA + H(+). It carries out the reaction (9Z)-hexadecenoyl-CoA + glycine = N-(9Z-hexadecenoyl)-glycine + CoA + H(+). It catalyses the reaction octadecanoyl-CoA + glycine = N-octadecanoylglycine + CoA + H(+). The enzyme catalyses (5Z,8Z,11Z,14Z)-eicosatetraenoyl-CoA + glycine = N-(5Z,8Z,11Z,14Z)-eicosatetraenoyl-glycine + CoA + H(+). The catalysed reaction is (9Z)-octadecenoyl-CoA + glycine = N-(9Z-octadecenoyl)glycine + CoA + H(+). It carries out the reaction octanoyl-CoA + glycine = N-octanoylglycine + CoA + H(+). It catalyses the reaction decanoyl-CoA + glycine = N-decanoylglycine + CoA + H(+). The enzyme catalyses tetradecanoyl-CoA + glycine = N-tetradecanoylglycine + CoA + H(+). The catalysed reaction is dodecanoyl-CoA + glycine = N-dodecanoylglycine + CoA + H(+). It carries out the reaction (9Z,12Z)-octadecadienoyl-CoA + glycine = N-(9Z,12Z-octadecadienoyl)-glycine + CoA + H(+). It catalyses the reaction a fatty acyl-CoA + glycine = an N-(fatty acyl)-glycine + CoA + H(+). Mitochondrial acyltransferase which transfers the acyl group to the N-terminus of glycine. Conjugates numerous substrates, such as arachidonoyl-CoA and saturated medium and long-chain acyl-CoAs ranging from chain-length C8:0-CoA to C18:0-CoA, to form a variety of N-acylglycines. Shows a preference for monounsaturated fatty acid oleoyl-CoA (C18:1-CoA) as an acyl donor. Does not exhibit any activity toward C22:6-CoA and chenodeoxycholoyl-CoA, nor toward serine or alanine. This chain is Glycine N-acyltransferase-like protein 2, found in Homo sapiens (Human).